Here is a 360-residue protein sequence, read N- to C-terminus: MPTILVSALEASSNMHLEELHRNLPEDYRFIGVFEGKNALYSPREFSIMGFRDVIGRLGFLLKAHKEMVQLAKQADMVLLMDSSSFNIPLAKKIKKQDPHKKIMYYILPQVWAWKKWRAKSLEKYCDFLGAILPFEVGYYQKKAQYVGHPLLDEIKYYKKDIKGETLVFMPGSRKSEIAKMFPLFVKVAQILEQNEGFKRRVLVVPSFFKGLDLKALYGEDIQLFEISYDAHKSLFEAEFAFICSGTATLEAALIGTPFVLAYRAKTMDFLIARMLVNLHYIGLANIFYNALNDETPGLGESQLHPELIQHFLSVEGLLKAYEEMDRERYFKESLRLREYLKHGSARKIANEMAFLLNLT.

Belongs to the LpxB family.

The enzyme catalyses a lipid X + a UDP-2-N,3-O-bis[(3R)-3-hydroxyacyl]-alpha-D-glucosamine = a lipid A disaccharide + UDP + H(+). It participates in bacterial outer membrane biogenesis; LPS lipid A biosynthesis. Functionally, condensation of UDP-2,3-diacylglucosamine and 2,3-diacylglucosamine-1-phosphate to form lipid A disaccharide, a precursor of lipid A, a phosphorylated glycolipid that anchors the lipopolysaccharide to the outer membrane of the cell. This chain is Lipid-A-disaccharide synthase, found in Helicobacter pylori (strain G27).